The chain runs to 34 residues: Photosystem II reaction center protein Psb30 (34 aa).

The chain crosses the membrane as a helical span at residues 6-26 (VIGQLVSTGLIGLLGPAVIIL).

This sequence belongs to the Psb30/Ycf12 family. PSII is composed of 1 copy each of membrane proteins PsbA, PsbB, PsbC, PsbD, PsbE, PsbF, PsbH, PsbI, PsbJ, PsbK, PsbL, PsbM, PsbT, PsbX, PsbY, PsbZ, Psb30/Ycf12, peripheral proteins of the oxygen-evolving complex and a large number of cofactors. It forms dimeric complexes.

It localises to the plastid. The protein resides in the chloroplast thylakoid membrane. Its function is as follows. A core subunit of photosystem II (PSII), probably helps stabilize the reaction center. The sequence is that of Photosystem II reaction center protein Psb30 from Skeletonema costatum (Marine centric diatom).